The following is a 444-amino-acid chain: Adenylosuccinate synthetase (444 aa).

GTP-binding positions include 19-25 and 47-49; these read GDEGKGK and GHT. The active-site Proton acceptor is the D20. The Mg(2+) site is built by D20 and G47. IMP-binding positions include 20–23, 45–48, T139, R153, Q234, T249, and R317; these read DEGK and NAGH. Residue H48 is the Proton donor of the active site. 313 to 319 is a substrate binding site; the sequence is TVTGRPR. GTP-binding positions include R319, 345 to 347, and 427 to 429; these read KLD and STG.

The protein belongs to the adenylosuccinate synthetase family. In terms of assembly, homodimer. It depends on Mg(2+) as a cofactor.

The protein resides in the cytoplasm. The catalysed reaction is IMP + L-aspartate + GTP = N(6)-(1,2-dicarboxyethyl)-AMP + GDP + phosphate + 2 H(+). The protein operates within purine metabolism; AMP biosynthesis via de novo pathway; AMP from IMP: step 1/2. Functionally, plays an important role in the de novo pathway of purine nucleotide biosynthesis. Catalyzes the first committed step in the biosynthesis of AMP from IMP. This Methylibium petroleiphilum (strain ATCC BAA-1232 / LMG 22953 / PM1) protein is Adenylosuccinate synthetase.